The sequence spans 250 residues: Peptidyl-tRNA hydrolase (250 aa).

A tRNA-binding site is contributed by Y14. H19 acts as the Proton acceptor in catalysis. Residues F64, N66, and N112 each contribute to the tRNA site. The disordered stretch occupies residues 192–250 (MGDGNQRPGGVKTDPAQLEKAPPKAQSHIRQARQNQKKPNIPESGPMAEMLKKLLGKKD). The segment covering 219–229 (HIRQARQNQKK) has biased composition (polar residues). Residues 241-250 (MLKKLLGKKD) show a composition bias toward basic and acidic residues.

The protein belongs to the PTH family. In terms of assembly, monomer.

It is found in the cytoplasm. The catalysed reaction is an N-acyl-L-alpha-aminoacyl-tRNA + H2O = an N-acyl-L-amino acid + a tRNA + H(+). Functionally, hydrolyzes ribosome-free peptidyl-tRNAs (with 1 or more amino acids incorporated), which drop off the ribosome during protein synthesis, or as a result of ribosome stalling. Catalyzes the release of premature peptidyl moieties from peptidyl-tRNA molecules trapped in stalled 50S ribosomal subunits, and thus maintains levels of free tRNAs and 50S ribosomes. The sequence is that of Peptidyl-tRNA hydrolase from Brucella canis (strain ATCC 23365 / NCTC 10854 / RM-666).